Here is a 264-residue protein sequence, read N- to C-terminus: Regulatory protein RecX (264 aa).

It belongs to the RecX family.

The protein resides in the cytoplasm. Its function is as follows. Modulates RecA activity. The chain is Regulatory protein RecX from Lacticaseibacillus casei (strain BL23) (Lactobacillus casei).